The chain runs to 141 residues: Arsenate reductase (141 aa).

Cys12 functions as the Nucleophile; cysteine thioarsenate intermediate in the catalytic mechanism.

It belongs to the ArsC family. In terms of assembly, monomer in solution.

It carries out the reaction [glutaredoxin]-dithiol + arsenate + glutathione + H(+) = glutathionyl-S-S-[glutaredoxin] + arsenite + H2O. Its activity is regulated as follows. Inhibited by the thiol reagents iodoacetate (IAA) and N-ethylmaleimide (NEM). Activity is rapidly inactivated by the histidine-modifying reagent diethylpyrocarbonate (DEPC). Involved in resistance to arsenate. Catalyzes the reduction of arsenate [As(V)] to arsenite [As(III)]. The resulting arsenite is then extruded from the cell via the ArsAB transport system. This Escherichia coli protein is Arsenate reductase.